The following is a 317-amino-acid chain: tRNA(Met) cytidine acetate ligase (317 aa).

ATP is bound by residues 6 to 19 (IAEY…HIYQ), G100, N157, and R182.

Belongs to the TmcAL family.

It is found in the cytoplasm. It catalyses the reaction cytidine(34) in elongator tRNA(Met) + acetate + ATP = N(4)-acetylcytidine(34) in elongator tRNA(Met) + AMP + diphosphate. Functionally, catalyzes the formation of N(4)-acetylcytidine (ac(4)C) at the wobble position of elongator tRNA(Met), using acetate and ATP as substrates. First activates an acetate ion to form acetyladenylate (Ac-AMP) and then transfers the acetyl group to tRNA to form ac(4)C34. The polypeptide is tRNA(Met) cytidine acetate ligase (Mesomycoplasma hyopneumoniae (strain J / ATCC 25934 / NCTC 10110) (Mycoplasma hyopneumoniae)).